Consider the following 533-residue polypeptide: MYRFLGLGTHPNDDQNKIHVLGRQYDPIKTQETEGKDLDLNSRFQQVLDSIKDGNKKSTTYSQSFIDDVYSKIWLTYRAGFPPIARDKDSPTFTLGALLRGQFDFNEIGFTSDAGWGCMIRTSQSLLANALLFLHLGRDWVFKAKDPANVEHDRIISWFVDIPDEPFSIHNFVQQGIKCCDKKPGEWFGPSAASRAIKNLCKEYPPCGLRVYFSSDCGDVYDTEVRELAYGDSDTFTPILVLLGIRLGVEKVNLYIGDLLRECLSLKQSVGISGRKTSFLALLSIGFQGDYLFYLIPTFPKKALTFGKHGEPVHRLQTKKTDENAAGQYPVFKYWIQIMKQTMMTAMKASKTTASTLKFFRVLMSNQSTHQKVTKLHLSHMDPSMLIGFLITSEDDFNDWKENIGKKDPSHKIVHITETKVSESTSNFQFNSLRSNSIADYDNCSGEDCDSAAIASDSDDFVDLAADFAVTGLEPRTHTGVDDETSSDYVQHFPIRRFSQPVIVSREDVVPTLSEDNGVIALDDKMSGISVGR.

Cys-118 serves as the catalytic Nucleophile.

Belongs to the peptidase C54 family.

It is found in the cytoplasm. Its subcellular location is the nucleus. The protein resides in the preautophagosomal structure. It catalyses the reaction [protein]-C-terminal L-amino acid-glycyl-phosphatidylethanolamide + H2O = [protein]-C-terminal L-amino acid-glycine + a 1,2-diacyl-sn-glycero-3-phosphoethanolamine. Functionally, cysteine protease that plays a key role in cytoplasm to vacuole transport (Cvt) and autophagy by mediating both proteolytic activation and delipidation of ATG8. Required for selective autophagic degradation of the nucleus (nucleophagy) as well as for mitophagy which contributes to regulate mitochondrial quantity and quality by eliminating the mitochondria to a basal level to fulfill cellular energy requirements and preventing excess ROS production. The protease activity is required for proteolytic activation of ATG8: cleaves the C-terminal amino acid of ATG8 to reveal a C-terminal glycine. ATG8 ubiquitin-like activity requires the exposure of the glycine at the C-terminus for its conjugation to phosphatidylethanolamine (PE) and its insertion to membranes, which is necessary for autophagy. The ATG8-PE conjugate mediates tethering between adjacent membranes and stimulates membrane hemifusion, leading to expansion of the autophagosomal membrane during autophagy. In addition to the protease activity, also catalyzes deconjugation of PE-conjugated forms of ATG8 during macroautophagy: ATG8 delipidation is required to release the protein from membranes, which facilitates multiple events during macroautophagy, and especially for efficient autophagosome biogenesis, the assembly of ATG9-containing tubulovesicular clusters into phagophores/autophagosomes, and for the disassembly of PAS-associated ATG components. ATG8 delipidation by ATG4 also recycles ATG8-PE generated on inappropriate membranes to maintain a reservoir of unlipidated ATG8 that is required for autophagosome formation at the PAS. The protein is Probable cysteine protease ATG4 (ATG4) of Komagataella pastoris (Yeast).